A 251-amino-acid chain; its full sequence is Insertion sequence IS5376 putative ATP-binding protein (251 aa).

Residue 105–112 (GPPGIGKT) coordinates ATP.

Belongs to the IS21/IS1162 putative ATP-binding protein family.

The sequence is that of Insertion sequence IS5376 putative ATP-binding protein from Geobacillus stearothermophilus (Bacillus stearothermophilus).